A 411-amino-acid chain; its full sequence is Tyrosine--tRNA ligase (411 aa).

Y36 lines the L-tyrosine pocket. The 'HIGH' region motif lies at 41–50 (PTADSLHVGH). Residues Y172 and Q176 each contribute to the L-tyrosine site. Residues 232 to 236 (KMGKT) carry the 'KMSKS' region motif. K235 serves as a coordination point for ATP. The region spanning 344–409 (YSIANILVVT…GKKNHIKVII (66 aa)) is the S4 RNA-binding domain.

It belongs to the class-I aminoacyl-tRNA synthetase family. TyrS type 1 subfamily. Homodimer.

The protein localises to the cytoplasm. The catalysed reaction is tRNA(Tyr) + L-tyrosine + ATP = L-tyrosyl-tRNA(Tyr) + AMP + diphosphate + H(+). In terms of biological role, catalyzes the attachment of tyrosine to tRNA(Tyr) in a two-step reaction: tyrosine is first activated by ATP to form Tyr-AMP and then transferred to the acceptor end of tRNA(Tyr). The sequence is that of Tyrosine--tRNA ligase from Malacoplasma penetrans (strain HF-2) (Mycoplasma penetrans).